The sequence spans 130 residues: Small ribosomal subunit protein uS9 (130 aa).

This sequence belongs to the universal ribosomal protein uS9 family.

This Caldicellulosiruptor bescii (strain ATCC BAA-1888 / DSM 6725 / KCTC 15123 / Z-1320) (Anaerocellum thermophilum) protein is Small ribosomal subunit protein uS9.